The following is a 294-amino-acid chain: Cytidine deaminase (294 aa).

2 consecutive CMP/dCMP-type deaminase domains span residues D48–K168 and V186–G294. A substrate-binding site is contributed by N89–E91. H102 provides a ligand contact to Zn(2+). The active-site Proton donor is the E104. 2 residues coordinate Zn(2+): C129 and C132.

The protein belongs to the cytidine and deoxycytidylate deaminase family. In terms of assembly, homodimer. It depends on Zn(2+) as a cofactor.

The catalysed reaction is cytidine + H2O + H(+) = uridine + NH4(+). The enzyme catalyses 2'-deoxycytidine + H2O + H(+) = 2'-deoxyuridine + NH4(+). In terms of biological role, this enzyme scavenges exogenous and endogenous cytidine and 2'-deoxycytidine for UMP synthesis. This is Cytidine deaminase from Klebsiella pneumoniae (strain 342).